A 702-amino-acid polypeptide reads, in one-letter code: Acetylcholinesterase (702 aa).

An N-terminal signal peptide occupies residues 1–36 (MEIRGLITRLLGPCHLRHLILCSLGLYSILVQSVHC). Residues 107 to 134 (HIHSTTTRRRGLTRRESSSDATDSDPLV) are disordered. N-linked (GlcNAc...) asparagine glycosylation occurs at N187. C195 and C222 are disulfide-bonded. The active-site Acyl-ester intermediate is the S327. C381 and C394 are oxidised to a cystine. Active-site charge relay system residues include E453 and H567. A disulfide bridge links C529 with C650. N637 carries N-linked (GlcNAc...) asparagine glycosylation.

The protein belongs to the type-B carboxylesterase/lipase family.

The protein resides in the synapse. The protein localises to the secreted. It is found in the cell membrane. The enzyme catalyses acetylcholine + H2O = choline + acetate + H(+). Its function is as follows. Rapidly hydrolyzes choline released into the synapse. The chain is Acetylcholinesterase (ACHE1) from Culex pipiens (House mosquito).